The chain runs to 931 residues: Dipeptidyl aminopeptidase A (931 aa).

The segment covering 1 to 13 (MSASTHSHKRKNS) has biased composition (basic residues). Positions 1–58 (MSASTHSHKRKNSHLFPQRKSSNSSMDKPFFPNNDSVANTDPQSNENGHTINEIRPTE) are disordered. At 1–119 (MSASTHSHKR…GEWSLPEKRS (119 aa)) the chain is on the cytoplasmic side. The segment covering 33-50 (NNDSVANTDPQSNENGHT) has biased composition (polar residues). A helical; Signal-anchor for type II membrane protein membrane pass occupies residues 120–140 (YVLVFTLIALSVLVLLVILIP). Over 141-931 (SKLLPTKITR…RFDNTEVLHL (791 aa)) the chain is Lumenal. An N-linked (GlcNAc...) asparagine glycan is attached at asparagine 377. Serine 785 serves as the catalytic Charge relay system. Asparagine 814 carries N-linked (GlcNAc...) asparagine glycosylation. Active-site charge relay system residues include aspartate 863 and histidine 896.

It belongs to the peptidase S9B family.

Its subcellular location is the vacuole membrane. Functionally, responsible for the proteolytic maturation of the alpha-factor precursor. The protein is Dipeptidyl aminopeptidase A (STE13) of Saccharomyces cerevisiae (strain ATCC 204508 / S288c) (Baker's yeast).